The primary structure comprises 560 residues: Membrane protein insertase YidC (560 aa).

The helical transmembrane segment at 7–27 (ILIVALAIVSYVMVLKWNQDY) threads the bilayer. The tract at residues 43 to 72 (APAIPDTPLGNNASASADVPSANGETSAPL) is disordered. The next 4 helical transmembrane spans lie at 367 to 387 (IVGNWGWSIIFLTMLIKGIFF), 437 to 457 (LGGCLPILVQMPVFLSLYWVL), 468 to 488 (FMLWITDLSIKDPFFILPIIM), and 515 to 535 (PIIFTFFFLWFPAGLVLYWVV).

This sequence belongs to the OXA1/ALB3/YidC family. Type 1 subfamily. As to quaternary structure, interacts with the Sec translocase complex via SecD. Specifically interacts with transmembrane segments of nascent integral membrane proteins during membrane integration.

The protein resides in the cell inner membrane. Functionally, required for the insertion and/or proper folding and/or complex formation of integral membrane proteins into the membrane. Involved in integration of membrane proteins that insert both dependently and independently of the Sec translocase complex, as well as at least some lipoproteins. Aids folding of multispanning membrane proteins. In Pseudomonas fluorescens (strain SBW25), this protein is Membrane protein insertase YidC.